Here is a 312-residue protein sequence, read N- to C-terminus: tRNA pseudouridine synthase B (312 aa).

The Nucleophile role is filled by aspartate 37.

This sequence belongs to the pseudouridine synthase TruB family. Type 1 subfamily.

The enzyme catalyses uridine(55) in tRNA = pseudouridine(55) in tRNA. Its function is as follows. Responsible for synthesis of pseudouridine from uracil-55 in the psi GC loop of transfer RNAs. This chain is tRNA pseudouridine synthase B, found in Deinococcus geothermalis (strain DSM 11300 / CIP 105573 / AG-3a).